Here is a 96-residue protein sequence, read N- to C-terminus: Putative defensin-like protein 263 (96 aa).

The N-terminal stretch at 1–26 (MEKTSLKLVFLFSLTVIALCLSLSAA) is a signal peptide. Disulfide bonds link C48–C96, C67–C86, C73–C91, and C77–C93.

Belongs to the DEFL family.

The protein resides in the secreted. This Arabidopsis thaliana (Mouse-ear cress) protein is Putative defensin-like protein 263.